A 157-amino-acid polypeptide reads, in one-letter code: Deoxyuridine 5'-triphosphate nucleotidohydrolase (157 aa).

DUMP-binding residues include serine 63, glycine 76, aspartate 79, tyrosine 82, lysine 87, arginine 132, phenylalanine 137, and glycine 138. The tract at residues asparagine 125–glutamate 157 is disordered. Basic and acidic residues predominate over residues asparagine 143–glutamate 157.

The protein belongs to the dUTPase family. Homotrimer. It depends on Mg(2+) as a cofactor.

The enzyme catalyses dUTP + H2O = dUMP + diphosphate + H(+). Its pathway is pyrimidine metabolism; dUMP biosynthesis; dUMP from dCTP (dUTP route): step 2/2. In terms of biological role, involved in nucleotide metabolism via production of dUMP, the immediate precursor of thymidine nucleotides, and decreases the intracellular concentration of dUTP so that uracil cannot be incorporated into DNA. This Yarrowia lipolytica (strain CLIB 122 / E 150) (Yeast) protein is Deoxyuridine 5'-triphosphate nucleotidohydrolase (DUT1).